The sequence spans 924 residues: Translation initiation factor IF-2 (924 aa).

Positions 118-325 (PSTAHREELA…QAPVVGGVRL (208 aa)) are disordered. Composition is skewed to pro residues over residues 150–173 (APHPGHPGMPTGPHPGPAPKPGGR) and 192–201 (IPRPPAPRPS). Positions 202 to 212 (ASPSSMSPRPG) are enriched in low complexity. Positions 229 to 295 (RPGGGRPGAP…GAAGAFGRPG (67 aa)) are enriched in gly residues. Residues 299 to 308 (RRGRKSKRQK) are compositionally biased toward basic residues. In terms of domain architecture, tr-type G spans 420–591 (VRPPVVTVMG…AVLLTADAAL (172 aa)). The segment at 429–436 (GHVDHGKT) is G1. Residue 429-436 (GHVDHGKT) participates in GTP binding. Residues 454-458 (GITQH) form a G2 region. A G3 region spans residues 479–482 (DTPG). Residues 479-483 (DTPGH) and 533-536 (NKID) contribute to the GTP site. The G4 stretch occupies residues 533–536 (NKID). The segment at 569-571 (SAK) is G5.

This sequence belongs to the TRAFAC class translation factor GTPase superfamily. Classic translation factor GTPase family. IF-2 subfamily.

The protein localises to the cytoplasm. In terms of biological role, one of the essential components for the initiation of protein synthesis. Protects formylmethionyl-tRNA from spontaneous hydrolysis and promotes its binding to the 30S ribosomal subunits. Also involved in the hydrolysis of GTP during the formation of the 70S ribosomal complex. This is Translation initiation factor IF-2 from Mycobacterium leprae (strain Br4923).